The sequence spans 90 residues: ATP synthase subunit c (90 aa).

A run of 2 helical transmembrane segments spans residues 17-37 and 70-90; these read PLAYGLTMVAAGLAIMGAGVV and LAIVETASIYCFIIALLIIFV.

The protein belongs to the ATPase C chain family. As to quaternary structure, F-type ATPases have 2 components, F(1) - the catalytic core - and F(0) - the membrane proton channel. F(1) has five subunits: alpha(3), beta(3), gamma(1), delta(1), epsilon(1). F(0) has three main subunits: a(1), b(2) and c(10-14). The alpha and beta chains form an alternating ring which encloses part of the gamma chain. F(1) is attached to F(0) by a central stalk formed by the gamma and epsilon chains, while a peripheral stalk is formed by the delta and b chains.

Its subcellular location is the cell membrane. Its function is as follows. F(1)F(0) ATP synthase produces ATP from ADP in the presence of a proton or sodium gradient. F-type ATPases consist of two structural domains, F(1) containing the extramembraneous catalytic core and F(0) containing the membrane proton channel, linked together by a central stalk and a peripheral stalk. During catalysis, ATP synthesis in the catalytic domain of F(1) is coupled via a rotary mechanism of the central stalk subunits to proton translocation. Key component of the F(0) channel; it plays a direct role in translocation across the membrane. A homomeric c-ring of between 10-14 subunits forms the central stalk rotor element with the F(1) delta and epsilon subunits. The polypeptide is ATP synthase subunit c (Metamycoplasma arthritidis (strain 158L3-1) (Mycoplasma arthritidis)).